We begin with the raw amino-acid sequence, 137 residues long: Phosphomevalonate dehydratase small subunit (137 aa).

Ser62 serves as the catalytic Proton acceptor.

Belongs to the AcnX type II small subunit family. As to quaternary structure, heterodimer composed of a large subunit (PMDh-L) and a small subunit (PMDh-S).

It carries out the reaction (R)-5-phosphomevalonate = (2E)-3-methyl-5-phosphooxypent-2-enoate + H2O. The protein operates within isoprenoid biosynthesis; isopentenyl diphosphate biosynthesis via mevalonate pathway. Its function is as follows. Component of a hydro-lyase that catalyzes the dehydration of mevalonate 5-phosphate (MVA5P) to form trans-anhydromevalonate 5-phosphate (tAHMP). Involved in the archaeal mevalonate (MVA) pathway, which provides fundamental precursors for isoprenoid biosynthesis, such as isopentenyl diphosphate (IPP) and dimethylallyl diphosphate (DMAPP). The polypeptide is Phosphomevalonate dehydratase small subunit (Methanothrix thermoacetophila (strain DSM 6194 / JCM 14653 / NBRC 101360 / PT) (Methanosaeta thermophila)).